A 130-amino-acid chain; its full sequence is Large ribosomal subunit protein bL17 (130 aa).

The protein belongs to the bacterial ribosomal protein bL17 family. As to quaternary structure, part of the 50S ribosomal subunit. Contacts protein L32.

The sequence is that of Large ribosomal subunit protein bL17 from Shewanella pealeana (strain ATCC 700345 / ANG-SQ1).